The primary structure comprises 115 residues: Translation initiation factor 1A 2 (115 aa).

The tract at residues 1–34 (MANYRSTIRHRNSGSRKSVSGDTHEVTRVRTPQK) is disordered. The span at 22 to 34 (DTHEVTRVRTPQK) shows a compositional bias: basic and acidic residues. The S1-like domain occupies 27 to 101 (TRVRTPQKDR…SKADVTWKYT (75 aa)).

It belongs to the eIF-1A family.

Seems to be required for maximal rate of protein biosynthesis. Enhances ribosome dissociation into subunits and stabilizes the binding of the initiator Met-tRNA(I) to 40 S ribosomal subunits. The sequence is that of Translation initiation factor 1A 2 from Methanosarcina barkeri (strain Fusaro / DSM 804).